Reading from the N-terminus, the 360-residue chain is UDP-arabinopyranose mutase 2 (360 aa).

N-acetylvaline is present on valine 2. Residues aspartate 110–aspartate 112 carry the DXD motif motif. Residue arginine 158 is glycosylated (N-linked (Glc...) arginine).

It belongs to the RGP family. As to quaternary structure, heteromers with RGP1, RGP4 and RGP5. Mn(2+) is required as a cofactor. The cofactor is Mg(2+). In terms of processing, reversibly glycosylated in vitro by UDP-glucose, UDP-xylose and UDP-galactose, but not UDP-mannose. In terms of tissue distribution, predominantly expressed in shoot and root apical meristems. Expressed in epidermal cells of leaves, inflorescence stems and seed coat. Expressed in pollen.

The protein resides in the cytoplasm. It is found in the cytosol. The protein localises to the golgi apparatus. The catalysed reaction is UDP-beta-L-arabinofuranose = UDP-beta-L-arabinopyranose. Functionally, UDP-L-arabinose mutase involved in the biosynthesis of cell wall non-cellulosic polysaccharides. Catalyzes the interconvertion of UDP-L-arabinopyranose (UDP-Arap) and UDP-L-arabinofuranose (UDP-Araf) in vitro. Preferentially catalyzes the formation of UDP-Arap from UDP-Araf. At thermodynamic equilibrium in vitro the ratio of the pyranose form over the furanose form is 95:5. Is not active on other UDP-sugars (UDP-Gal, UDP-Xyl, UDP-Glc, GDP-Man and GDP-Fuc). Functions redundantly with RGP2 and is essential for proper cell walls and pollen development. Probably involved in the formation of the pectocellulosic cell wall layer intine. Is probably active as heteromer in vivo. This chain is UDP-arabinopyranose mutase 2, found in Arabidopsis thaliana (Mouse-ear cress).